The chain runs to 199 residues: UPF0301 protein Anae109_0457 (199 aa).

This sequence belongs to the UPF0301 (AlgH) family.

The sequence is that of UPF0301 protein Anae109_0457 from Anaeromyxobacter sp. (strain Fw109-5).